Consider the following 131-residue polypeptide: Fumarate reductase subunit C (131 aa).

3 helical membrane passes run 30-50 (EGTAVPTVWFSIELIFGLFAL), 57-77 (WMGFVGFLQNPVVVILNLITL), and 109-129 (IIKGLWVVTAVVTVVILYVAL).

This sequence belongs to the FrdC family. Part of an enzyme complex containing four subunits: a flavoprotein (FrdA), an iron-sulfur protein (FrdB), and two hydrophobic anchor proteins (FrdC and FrdD).

It is found in the cell inner membrane. Its function is as follows. Two distinct, membrane-bound, FAD-containing enzymes are responsible for the catalysis of fumarate and succinate interconversion; fumarate reductase is used in anaerobic growth, and succinate dehydrogenase is used in aerobic growth. Anchors the catalytic components of the fumarate reductase complex to the cell inner membrane, binds quinones. The sequence is that of Fumarate reductase subunit C from Salmonella dublin (strain CT_02021853).